The sequence spans 196 residues: RNA pyrophosphohydrolase (196 aa).

The region spanning G6–K149 is the Nudix hydrolase domain. Residues G38–G59 carry the Nudix box motif. Positions S166–Q196 are disordered. Polar residues predominate over residues R167–K184. Positions Y185–Q196 are enriched in basic residues.

This sequence belongs to the Nudix hydrolase family. RppH subfamily. Requires a divalent metal cation as cofactor.

Functionally, accelerates the degradation of transcripts by removing pyrophosphate from the 5'-end of triphosphorylated RNA, leading to a more labile monophosphorylated state that can stimulate subsequent ribonuclease cleavage. The chain is RNA pyrophosphohydrolase from Haemophilus influenzae (strain 86-028NP).